The chain runs to 28 residues: Conotoxin de7b (28 aa).

3 disulfides stabilise this stretch: C2-C18, C9-C22, and C17-C27. P4 is subject to 4-hydroxyproline; partial. A 4-carboxyglutamate; partial modification is found at E7. At P14 the chain carries 4-hydroxyproline; partial.

In terms of tissue distribution, expressed by the venom duct.

Its subcellular location is the secreted. In terms of biological role, may inhibit sodium (Nav) or calcium channels (Cav). This chain is Conotoxin de7b, found in Conasprella delessertii (Sozon's cone).